A 296-amino-acid chain; its full sequence is mRNA export factor rsm1 (296 aa).

The segment at 40–174 (PWSREEFLRR…VSTHLPEEMT (135 aa)) adopts a C3HC-type zinc-finger fold.

It localises to the cytoplasm. The protein resides in the nucleus. In terms of biological role, involved in the export of mRNA from the nucleus to the cytoplasm. The chain is mRNA export factor rsm1 (rsm1) from Schizosaccharomyces pombe (strain 972 / ATCC 24843) (Fission yeast).